The primary structure comprises 495 residues: 1-aminocyclopropane-1-carboxylate synthase 6 (495 aa).

2 residues coordinate substrate: Glu58 and Tyr96. Lys280 is subject to N6-(pyridoxal phosphate)lysine. Ser480, Ser483, and Ser488 each carry phosphoserine.

Belongs to the class-I pyridoxal-phosphate-dependent aminotransferase family. As to quaternary structure, homodimer and heterodimer. In vivo, the relevance of heterodimerization with other ACS enzymes is however unsure. Interacts with GRF3. Requires pyridoxal 5'-phosphate as cofactor. Phosphorylated on serine residue by MAP kinase (MPK6). Post-translationally, may be processed at its C-terminus. Expressed in roots and flowers.

The enzyme catalyses S-adenosyl-L-methionine = 1-aminocyclopropane-1-carboxylate + S-methyl-5'-thioadenosine + H(+). It participates in alkene biosynthesis; ethylene biosynthesis via S-adenosyl-L-methionine; ethylene from S-adenosyl-L-methionine: step 1/2. Functionally, 1-aminocyclopropane-1-carboxylate synthase (ACS) enzymes catalyze the conversion of S-adenosyl-L-methionine (SAM) into 1-aminocyclopropane-1-carboxylate (ACC), a direct precursor of ethylene. Involved in bacterial flagellin-induced ethylene production. The sequence is that of 1-aminocyclopropane-1-carboxylate synthase 6 (ACS6) from Arabidopsis thaliana (Mouse-ear cress).